A 117-amino-acid polypeptide reads, in one-letter code: Large ribosomal subunit protein bL19 (117 aa).

This sequence belongs to the bacterial ribosomal protein bL19 family.

In terms of biological role, this protein is located at the 30S-50S ribosomal subunit interface and may play a role in the structure and function of the aminoacyl-tRNA binding site. In Cutibacterium acnes (strain DSM 16379 / KPA171202) (Propionibacterium acnes), this protein is Large ribosomal subunit protein bL19.